A 352-amino-acid chain; its full sequence is Anthranilate phosphoribosyltransferase (352 aa).

5-phospho-alpha-D-ribose 1-diphosphate-binding positions include Gly91, 94–95 (GD), Thr99, 101–104 (NIST), 119–127 (KHGNRASSS), and Ser131. Gly91 is an anthranilate binding site. Ser103 contributes to the Mg(2+) binding site. Asn122 is an anthranilate binding site. An anthranilate-binding site is contributed by Arg177. Mg(2+) contacts are provided by Asp235 and Glu236.

The protein belongs to the anthranilate phosphoribosyltransferase family. In terms of assembly, homodimer. Mg(2+) is required as a cofactor.

The enzyme catalyses N-(5-phospho-beta-D-ribosyl)anthranilate + diphosphate = 5-phospho-alpha-D-ribose 1-diphosphate + anthranilate. Its pathway is amino-acid biosynthesis; L-tryptophan biosynthesis; L-tryptophan from chorismate: step 2/5. Functionally, catalyzes the transfer of the phosphoribosyl group of 5-phosphorylribose-1-pyrophosphate (PRPP) to anthranilate to yield N-(5'-phosphoribosyl)-anthranilate (PRA). The polypeptide is Anthranilate phosphoribosyltransferase (Arthrobacter sp. (strain FB24)).